The following is a 407-amino-acid chain: Na(+)-translocating NADH-quinone reductase subunit F (407 aa).

Residues 3-23 (IILGVVMFTLIVLALTVMILF) traverse the membrane as a helical segment. The 2Fe-2S ferredoxin-type domain occupies 32–126 (GDITIDINED…NLKIELPEEI (95 aa)). 4 residues coordinate [2Fe-2S] cluster: Cys69, Cys75, Cys78, and Cys110. The FAD-binding FR-type domain occupies 129–269 (VKKWECEVIS…SGPFGEFFAK (141 aa)).

Belongs to the NqrF family. Composed of six subunits; NqrA, NqrB, NqrC, NqrD, NqrE and NqrF. It depends on [2Fe-2S] cluster as a cofactor. The cofactor is FAD.

Its subcellular location is the cell inner membrane. The enzyme catalyses a ubiquinone + n Na(+)(in) + NADH + H(+) = a ubiquinol + n Na(+)(out) + NAD(+). NQR complex catalyzes the reduction of ubiquinone-1 to ubiquinol by two successive reactions, coupled with the transport of Na(+) ions from the cytoplasm to the periplasm. The first step is catalyzed by NqrF, which accepts electrons from NADH and reduces ubiquinone-1 to ubisemiquinone by a one-electron transfer pathway. The protein is Na(+)-translocating NADH-quinone reductase subunit F of Yersinia enterocolitica serotype O:8 / biotype 1B (strain NCTC 13174 / 8081).